We begin with the raw amino-acid sequence, 241 residues long: ATP synthase subunit a (241 aa).

Transmembrane regions (helical) follow at residues Gly-30–Gly-50, Phe-91–Trp-111, Ile-128–Ser-148, Leu-193–Leu-213, and Gly-214–Gly-234.

It belongs to the ATPase A chain family. F-type ATPases have 2 components, CF(1) - the catalytic core - and CF(0) - the membrane proton channel. CF(1) has five subunits: alpha(3), beta(3), gamma(1), delta(1), epsilon(1). CF(0) has four main subunits: a, b, b' and c.

It is found in the cellular thylakoid membrane. Functionally, key component of the proton channel; it plays a direct role in the translocation of protons across the membrane. This is ATP synthase subunit a from Prochlorococcus marinus (strain MIT 9515).